A 394-amino-acid chain; its full sequence is MPTSNPAKPLDGFRVLDFTQNVAGPLAGQVLVDLGAEVIKVEAPGGEAARQITSVLPGRPPLATYFLPNNRGKKSVTVDLTTEQAKQQMLRLADTADVVLEAFRPGTMEKLGLGPDDLRSRNPNLIYARLTAYGGNGPHGSRPGIDLVVAAEAGMTTGMPTPEGKPQIIPFQLVDNASGHVLAQAVLAALLHRERNGVADVVQVAMYDVAVGLQANQLMMHLNRAASDQPKPEPAPKAKRRKGVGFATQPSDAFRTADGYIVISAYVPKHWQKLCYLIGRPDLVEDQRFAEQRSRSINYAELTAELELALASKTATEWVQLLQANGLMACLAHTWKQVVDTPLFAENDLTLEVGRGADTITVIRTPARYASFRAVVTDPPPTAGEHNAVFLARP.

Asp175 functions as the Nucleophile in the catalytic mechanism.

This sequence belongs to the CoA-transferase III family. As to quaternary structure, homodimer.

Probably involved in fatty acid metabolism. Binds to fatty acyl-CoAs of varying carbon chain lengths, with the highest binding affinity for palmitoyl-CoA (C16:0). In vitro, alters the cell wall lipid profile and protects mycobacteria from acidic, oxidative and antibiotic stress. May play a significant role in host-pathogen interaction. This Mycobacterium tuberculosis (strain ATCC 25618 / H37Rv) protein is Probable fatty acyl-CoA transferase Rv3272.